A 310-amino-acid polypeptide reads, in one-letter code: Ribosomal RNA small subunit methyltransferase H (310 aa).

S-adenosyl-L-methionine contacts are provided by residues 33–35 (AGH), Asp-53, Phe-79, Asp-100, and Gln-107.

This sequence belongs to the methyltransferase superfamily. RsmH family.

Its subcellular location is the cytoplasm. It catalyses the reaction cytidine(1402) in 16S rRNA + S-adenosyl-L-methionine = N(4)-methylcytidine(1402) in 16S rRNA + S-adenosyl-L-homocysteine + H(+). Specifically methylates the N4 position of cytidine in position 1402 (C1402) of 16S rRNA. This is Ribosomal RNA small subunit methyltransferase H from Clostridium tetani (strain Massachusetts / E88).